A 237-amino-acid chain; its full sequence is Demethylmenaquinone methyltransferase (237 aa).

S-adenosyl-L-methionine is bound by residues T58, D79, and 106–107; that span reads NA.

Belongs to the class I-like SAM-binding methyltransferase superfamily. MenG/UbiE family.

It catalyses the reaction a 2-demethylmenaquinol + S-adenosyl-L-methionine = a menaquinol + S-adenosyl-L-homocysteine + H(+). It functions in the pathway quinol/quinone metabolism; menaquinone biosynthesis; menaquinol from 1,4-dihydroxy-2-naphthoate: step 2/2. Functionally, methyltransferase required for the conversion of demethylmenaquinol (DMKH2) to menaquinol (MKH2). This chain is Demethylmenaquinone methyltransferase, found in Anoxybacillus flavithermus (strain DSM 21510 / WK1).